Here is a 324-residue protein sequence, read N- to C-terminus: Beta-ketoacyl-[acyl-carrier-protein] synthase III (324 aa).

Residues Cys112 and His249 contribute to the active site. The ACP-binding stretch occupies residues Gln250 to Arg254. Asn279 is an active-site residue.

It belongs to the thiolase-like superfamily. FabH family. In terms of assembly, homodimer.

The protein resides in the cytoplasm. It catalyses the reaction malonyl-[ACP] + acetyl-CoA + H(+) = 3-oxobutanoyl-[ACP] + CO2 + CoA. The protein operates within lipid metabolism; fatty acid biosynthesis. Functionally, catalyzes the condensation reaction of fatty acid synthesis by the addition to an acyl acceptor of two carbons from malonyl-ACP. Catalyzes the first condensation reaction which initiates fatty acid synthesis and may therefore play a role in governing the total rate of fatty acid production. Possesses both acetoacetyl-ACP synthase and acetyl transacylase activities. Its substrate specificity determines the biosynthesis of branched-chain and/or straight-chain of fatty acids. This Streptococcus pneumoniae serotype 19F (strain G54) protein is Beta-ketoacyl-[acyl-carrier-protein] synthase III.